A 257-amino-acid chain; its full sequence is Phosphonates import ATP-binding protein PhnC (257 aa).

Residues Ile-7 to Asp-251 form the ABC transporter domain. An ATP-binding site is contributed by Gly-40 to Ser-47.

This sequence belongs to the ABC transporter superfamily. Phosphonates importer (TC 3.A.1.9.1) family. In terms of assembly, the complex is composed of two ATP-binding proteins (PhnC), two transmembrane proteins (PhnE) and a solute-binding protein (PhnD).

The protein localises to the cell membrane. It catalyses the reaction phosphonate(out) + ATP + H2O = phosphonate(in) + ADP + phosphate + H(+). In terms of biological role, part of the ABC transporter complex PhnCDE involved in phosphonates import. Responsible for energy coupling to the transport system. The protein is Phosphonates import ATP-binding protein PhnC of Lactobacillus acidophilus (strain ATCC 700396 / NCK56 / N2 / NCFM).